The chain runs to 955 residues: Kinesin-like protein K39 (955 aa).

A Kinesin motor domain is found at arginine 12 to isoleucine 392. Glycine 122–threonine 129 provides a ligand contact to ATP. Positions proline 426 to glutamine 955 form a coiled coil. 2 disordered regions span residues glutamate 682 to glutamate 712 and threonine 725 to glutamine 955. A run of 7 repeats spans residues leucine 704–threonine 742, leucine 743–threonine 781, leucine 782–threonine 820, leucine 821–threonine 859, leucine 860–threonine 898, leucine 899–alanine 937, and leucine 938–glutamine 955. Positions leucine 704–glutamine 955 are 7 X 39 AA approximate tandem repeats. Basic and acidic residues-rich tracts occupy residues glutamine 785–alanine 794, glutamine 824–alanine 833, glutamine 863–alanine 872, glutamine 902–alanine 911, and glutamine 941–glutamine 955.

It belongs to the TRAFAC class myosin-kinesin ATPase superfamily. Kinesin family.

It localises to the cytoplasm. The protein localises to the cytoskeleton. The polypeptide is Kinesin-like protein K39 (KIN) (Leishmania chagasi).